A 221-amino-acid chain; its full sequence is Small ribosomal subunit protein uS3 (221 aa).

One can recognise a KH type-2 domain in the interval 39 to 108; it reads IRKFVKKELF…NVLINIVEVK (70 aa).

Belongs to the universal ribosomal protein uS3 family. Part of the 30S ribosomal subunit. Forms a tight complex with proteins S10 and S14.

Binds the lower part of the 30S subunit head. Binds mRNA in the 70S ribosome, positioning it for translation. The sequence is that of Small ribosomal subunit protein uS3 from Clostridium beijerinckii (strain ATCC 51743 / NCIMB 8052) (Clostridium acetobutylicum).